The primary structure comprises 83 residues: Bublin coiled-coil protein (83 aa).

The tract at residues 1 to 25 is disordered; that stretch reads MSGPNGDLGMPVDAGTEGENDSFGE. The stretch at 25–74 forms a coiled coil; that stretch reads EAEYAAINSMLDQINSCLDHLEEKNDHLHARLQELLESNRQTRLEFQQQL. A Phosphoserine modification is found at Ser-82.

It belongs to the UPF0184 (EST00098) family.

It localises to the cell junction. Its subcellular location is the cytoplasm. It is found in the cytoskeleton. Essential for intermediate filament organization in intestinal cells, interacts with intermediate filament and regulates intestinal lumen morphology. The polypeptide is Bublin coiled-coil protein (Mus musculus (Mouse)).